Consider the following 118-residue polypeptide: Light-harvesting protein B-800/850 gamma chain (118 aa).

Functionally, seems to be required for the LH-II stabilization. The polypeptide is Light-harvesting protein B-800/850 gamma chain (pucE) (Rhodobacter capsulatus (Rhodopseudomonas capsulata)).